The chain runs to 421 residues: Signal recognition particle receptor FtsY (421 aa).

Residues 1–10 (MFSFFRRKKK) show a composition bias toward basic residues. The interval 1–22 (MFSFFRRKKKQETPAPEEAQIQ) is disordered. GTP contacts are provided by residues 228 to 235 (GINGAGKT), 309 to 313 (DTAGR), and 373 to 376 (TKLD).

The protein belongs to the GTP-binding SRP family. FtsY subfamily. As to quaternary structure, part of the signal recognition particle protein translocation system, which is composed of SRP and FtsY. SRP is a ribonucleoprotein composed of Ffh and a 4.5S RNA molecule.

It is found in the cell membrane. Its subcellular location is the cytoplasm. The enzyme catalyses GTP + H2O = GDP + phosphate + H(+). Its function is as follows. Involved in targeting and insertion of nascent membrane proteins into the cytoplasmic membrane. Acts as a receptor for the complex formed by the signal recognition particle (SRP) and the ribosome-nascent chain (RNC). Interaction with SRP-RNC leads to the transfer of the RNC complex to the Sec translocase for insertion into the membrane, the hydrolysis of GTP by both Ffh and FtsY, and the dissociation of the SRP-FtsY complex into the individual components. The chain is Signal recognition particle receptor FtsY from Neisseria meningitidis serogroup C.